Here is an 818-residue protein sequence, read N- to C-terminus: MYNNSNSNNNNGSRKRSSPPLYINNNNSGNYISPPSPLSPKQTNNFLFNNGGFNSFENPQQQSPPQQQQLLFTSPIPTRPQNLYQYIDENELNTGYNNSNNNNNNNNNNNNNNNNNNNNNNNNSNNNNNSNNNNNNKMITTTTTTTTKSNNDYKKKIKKQINFKLDNLHESSEEEEEEQQEEEEEEEEKEELNYINNNNNKNDDDNNSQDEDKEEDKYHETNTDFGLLSVASKEDLMICLNVLKKEMGQFKNLSQNLLSRLQILENGIGQEKMIRLLNNNNNYNMNGSSDSSDSSNSSGHSRNNSDENMIDCYYVTRNNNNNNTNSLLIPPAPPQLQQQQQQQQFYSQDAVMISTYLLEVQKIVEKQRQYDSLLAQREKYWDIELNKITMAILNKLGPNPSTTVDLLNLPMNNMNINKNNNSNNNNNNNNHNYNKNNNNNNNNNNDFSNFNNDDCFYNSNNSCNSEDFDSFTALNNINNSIIRNQSSNSLNLKDDSEETNFNSLKSKTNNIFKRFYIYLFGTKKTITFWKKVAIIAIIVIVWPLIANLTYKFIVYLINKRRLAKTQPFIIGNNNTSNYNSSTAIGKSLKPIKSSILVPSSSSLPSSSSSSSSTSSSSNLLLPSSINNGTNAFKKIKSSLMKKNSDISSGVGNVVSSVASNVVGGSGSGVGAPDFVKAFIQGVSTGDGGSNDNLTNNALSSITNTFGNLNTVANSSIAPSIGSGLIGSSISPSSSSSSSSSANTASNIINNFTPSALSQLNLPGSSSSSSSFSNPVSSIANNFMSDSNRSPSSSSSSSSSTSDSENGMLKLVRNLLTHR.

Composition is skewed to low complexity over residues Met1–Ser33, Asn44–Gln68, and Asn97–Asn150. Disordered stretches follow at residues Met1–Gln68, Leu92–Asn150, Lys164–Glu220, Asn284–Asp306, and Asn415–Asn445. Acidic residues-rich tracts occupy residues Ser172–Glu190 and Asp205–Glu214. The segment covering Asn284–Arg302 has biased composition (low complexity). Residues Ile534–Val554 form a helical membrane-spanning segment. The tract at residues Ala779–Leu808 is disordered. A compositionally biased stretch (low complexity) spans Ser784–Ser803.

It localises to the membrane. This is an uncharacterized protein from Dictyostelium discoideum (Social amoeba).